The primary structure comprises 687 residues: Complement C1s subcomponent (687 aa).

The first 15 residues, 1-15 (MWCIVLLSLLAWVDA), serve as a signal peptide directing secretion. One can recognise a CUB 1 domain in the interval 16 to 130 (EPTMYGEILS…TGFAAYYVAV (115 aa)). The Ca(2+) site is built by E60, D68, D113, D131, V132, and E134. Residues C65 and C83 are joined by a disulfide bond. Positions 131-172 (DVNECTDFADSPCSHFCNNYIGGYFCSCPPEYFLHEDKKNCG) constitute an EGF-like; calcium-binding domain. Disulfide bonds link C135-C147, C143-C156, and C158-C171. Ca(2+) contacts are provided by N149, Y150, and G153. At N149 the chain carries (3R)-3-hydroxyasparagine. N174 is a glycosylation site (N-linked (GlcNAc...) asparagine). 9 disulfide bridges follow: C175–C202, C234–C251, C294–C341, C321–C354, C359–C403, C386–C421, C425–C548, C594–C617, and C626–C658. The CUB 2 domain occupies 175–290 (CSGDVFTTLI…KGWKFRYHGD (116 aa)). 2 Sushi domains span residues 292 to 356 (IPCP…RCQP) and 357 to 423 (VDCG…KCVP). N-linked (GlcNAc...) asparagine glycosylation occurs at N406. One can recognise a Peptidase S1 domain in the interval 438–679 (IFGGIITKIE…YIDWIRETMQ (242 aa)). Active-site charge relay system residues include H475 and D528. S630 acts as the Charge relay system in catalysis.

Belongs to the peptidase S1 family. As to quaternary structure, C1 is a calcium-dependent trimolecular complex of C1q, C1r and C1s in the molar ration of 1:2:2. Activated C1s is an disulfide-linked heterodimer of a heavy chain and a light chain. Post-translationally, the iron and 2-oxoglutarate dependent 3-hydroxylation of aspartate and asparagine is (R) stereospecific within EGF domains.

It catalyses the reaction Cleavage of Arg-|-Ala bond in complement component C4 to form C4a and C4b, and Lys(or Arg)-|-Lys bond in complement component C2 to form C2a and C2b: the 'classical' pathway C3 convertase.. With respect to regulation, inhibited by SERPING1. Functionally, C1s B chain is a serine protease that combines with C1q and C1r to form C1, the first component of the classical pathway of the complement system. C1r activates C1s so that it can, in turn, activate C2 and C4. Also cleaves IGFBP5 and thereby inhibits the trophic effects of IGF1. The chain is Complement C1s subcomponent from Sus scrofa (Pig).